Reading from the N-terminus, the 349-residue chain is Protein RecA (349 aa).

65–72 (GPESSGKT) contacts ATP.

This sequence belongs to the RecA family.

It localises to the cytoplasm. Functionally, can catalyze the hydrolysis of ATP in the presence of single-stranded DNA, the ATP-dependent uptake of single-stranded DNA by duplex DNA, and the ATP-dependent hybridization of homologous single-stranded DNAs. It interacts with LexA causing its activation and leading to its autocatalytic cleavage. This Vibrio vulnificus (strain CMCP6) protein is Protein RecA.